The chain runs to 482 residues: tRNA sulfurtransferase (482 aa).

The THUMP domain occupies 61 to 165; that stretch reads LAIRDALTRI…DDRLLLIKGR (105 aa). ATP is bound by residues 183-184, K265, G287, and Q296; that span reads LI. Residues C344 and C456 are joined by a disulfide bond. The Rhodanese domain maps to 404–482; sequence FGPNDVILDI…GFNNVKVYRP (79 aa). The Cysteine persulfide intermediate role is filled by C456.

This sequence belongs to the ThiI family.

The protein localises to the cytoplasm. It carries out the reaction [ThiI sulfur-carrier protein]-S-sulfanyl-L-cysteine + a uridine in tRNA + 2 reduced [2Fe-2S]-[ferredoxin] + ATP + H(+) = [ThiI sulfur-carrier protein]-L-cysteine + a 4-thiouridine in tRNA + 2 oxidized [2Fe-2S]-[ferredoxin] + AMP + diphosphate. The catalysed reaction is [ThiS sulfur-carrier protein]-C-terminal Gly-Gly-AMP + S-sulfanyl-L-cysteinyl-[cysteine desulfurase] + AH2 = [ThiS sulfur-carrier protein]-C-terminal-Gly-aminoethanethioate + L-cysteinyl-[cysteine desulfurase] + A + AMP + 2 H(+). It participates in cofactor biosynthesis; thiamine diphosphate biosynthesis. Functionally, catalyzes the ATP-dependent transfer of a sulfur to tRNA to produce 4-thiouridine in position 8 of tRNAs, which functions as a near-UV photosensor. Also catalyzes the transfer of sulfur to the sulfur carrier protein ThiS, forming ThiS-thiocarboxylate. This is a step in the synthesis of thiazole, in the thiamine biosynthesis pathway. The sulfur is donated as persulfide by IscS. In Shigella boydii serotype 4 (strain Sb227), this protein is tRNA sulfurtransferase.